The primary structure comprises 412 residues: UPF0754 membrane protein Synpcc7942_1098 (412 aa).

2 consecutive transmembrane segments (helical) span residues 8–28 and 390–410; these read LWLLPPVVGGIIGYFTNDLAI and IGGVLGVLLGCVQSLINVWSL.

It belongs to the UPF0754 family.

Its subcellular location is the cell inner membrane. In Synechococcus elongatus (strain ATCC 33912 / PCC 7942 / FACHB-805) (Anacystis nidulans R2), this protein is UPF0754 membrane protein Synpcc7942_1098.